The primary structure comprises 662 residues: DNA ligase (662 aa).

Residues 32 to 36 (DAEYD), 75 to 76 (SL), and E106 contribute to the NAD(+) site. K108 acts as the N6-AMP-lysine intermediate in catalysis. NAD(+) is bound by residues R129, E164, K271, and K295. Residues C389, C392, C407, and C413 each coordinate Zn(2+). The BRCT domain maps to 580–662 (SSNSVLNNKI…HKVISLGVFK (83 aa)).

This sequence belongs to the NAD-dependent DNA ligase family. LigA subfamily. Mg(2+) serves as cofactor. It depends on Mn(2+) as a cofactor.

The catalysed reaction is NAD(+) + (deoxyribonucleotide)n-3'-hydroxyl + 5'-phospho-(deoxyribonucleotide)m = (deoxyribonucleotide)n+m + AMP + beta-nicotinamide D-nucleotide.. Its function is as follows. DNA ligase that catalyzes the formation of phosphodiester linkages between 5'-phosphoryl and 3'-hydroxyl groups in double-stranded DNA using NAD as a coenzyme and as the energy source for the reaction. It is essential for DNA replication and repair of damaged DNA. The sequence is that of DNA ligase from Wolbachia pipientis wMel.